The primary structure comprises 353 residues: Photosystem II D2 protein (353 aa).

N-acetylthreonine is present on threonine 2. A Phosphothreonine modification is found at threonine 2. Residues 41 to 61 traverse the membrane as a helical segment; the sequence is CAYFALGGWFTGTTFVTSWYT. Histidine 118 provides a ligand contact to chlorophyll a. Residues 125–141 form a helical membrane-spanning segment; it reads GFMLRQFELARSVQLRP. Residues glutamine 130 and asparagine 143 each coordinate pheophytin a. The chain crosses the membrane as a helical span at residues 153–166; the sequence is VFVSVFLIYPLGQS. Histidine 198 provides a ligand contact to chlorophyll a. The chain crosses the membrane as a helical span at residues 208–228; sequence AALLCAIHGATVENTLFEDGD. Residues histidine 215 and phenylalanine 262 each coordinate a plastoquinone. Histidine 215 is a Fe cation binding site. Histidine 269 is a Fe cation binding site. The chain crosses the membrane as a helical span at residues 279–295; sequence GLWMSALGVVGLALNLR.

It belongs to the reaction center PufL/M/PsbA/D family. In terms of assembly, PSII is composed of 1 copy each of membrane proteins PsbA, PsbB, PsbC, PsbD, PsbE, PsbF, PsbH, PsbI, PsbJ, PsbK, PsbL, PsbM, PsbT, PsbX, PsbY, PsbZ, Psb30/Ycf12, at least 3 peripheral proteins of the oxygen-evolving complex and a large number of cofactors. It forms dimeric complexes. Requires The D1/D2 heterodimer binds P680, chlorophylls that are the primary electron donor of PSII, and subsequent electron acceptors. It shares a non-heme iron and each subunit binds pheophytin, quinone, additional chlorophylls, carotenoids and lipids. There is also a Cl(-1) ion associated with D1 and D2, which is required for oxygen evolution. The PSII complex binds additional chlorophylls, carotenoids and specific lipids. as cofactor.

It is found in the plastid. It localises to the chloroplast thylakoid membrane. The enzyme catalyses 2 a plastoquinone + 4 hnu + 2 H2O = 2 a plastoquinol + O2. Its function is as follows. Photosystem II (PSII) is a light-driven water:plastoquinone oxidoreductase that uses light energy to abstract electrons from H(2)O, generating O(2) and a proton gradient subsequently used for ATP formation. It consists of a core antenna complex that captures photons, and an electron transfer chain that converts photonic excitation into a charge separation. The D1/D2 (PsbA/PsbD) reaction center heterodimer binds P680, the primary electron donor of PSII as well as several subsequent electron acceptors. D2 is needed for assembly of a stable PSII complex. This chain is Photosystem II D2 protein, found in Amborella trichopoda.